We begin with the raw amino-acid sequence, 73 residues long: Beta-defensin 108B (73 aa).

The N-terminal stretch at 1-22 (MRIAVLLFAIFFFMSQVLPARG) is a signal peptide. 3 cysteine pairs are disulfide-bonded: cysteine 28/cysteine 55, cysteine 35/cysteine 49, and cysteine 39/cysteine 56.

The protein belongs to the beta-defensin family. In terms of tissue distribution, specifically expressed in testis. Low expression is detected also in liver.

The protein localises to the secreted. Has antibacterial activity. The chain is Beta-defensin 108B (DEFB108B) from Homo sapiens (Human).